Here is a 94-residue protein sequence, read N- to C-terminus: MLKLNLQFFASKKGVSSTKNGRDSESKRLGAKRADGQYVSGGSILYRQRGTKIYPGENVGRGGDDTLFAKIDGVVKFERKGRDKKQVSVYAVAE.

A propeptide spanning residues methionine 1–phenylalanine 9 is cleaved from the precursor.

It belongs to the bacterial ribosomal protein bL27 family. Post-translationally, the N-terminus is cleaved by ribosomal processing cysteine protease Prp.

This is Large ribosomal subunit protein bL27 from Staphylococcus epidermidis (strain ATCC 35984 / DSM 28319 / BCRC 17069 / CCUG 31568 / BM 3577 / RP62A).